A 123-amino-acid chain; its full sequence is Potassium voltage-gated channel subfamily E member 2 (123 aa).

N-linked (GlcNAc...) asparagine glycosylation is found at N6 and N29. The helical transmembrane segment at 49–69 (VILYLMVMIGMFSFIIVAILV) threads the bilayer. At 70–123 (STVKSKRREHSNDPYHQYIVEDWQEKYKSQILNLEESKATIHENIGAAGFKMSP) the chain is on the cytoplasmic side.

Belongs to the potassium channel KCNE family. In terms of assembly, interacts with KCNB1. Associates with KCNH2/ERG1. May associate with KCNQ2 and KCNQ3. Associates with HCN1 and probably HCN2. Heteromultimer with KCNC2. Interacts with KCNC2. Interacts with KCNQ1; forms a heterooligomer complex that targets to the membrane raft and leading to currents with an apparently instantaneous activation, a rapid deactivation process and a linear current-voltage relationship and decreases the amplitude of the outward current. As to expression, highly expressed in brain, heart, skeletal muscle, pancreas, placenta, kidney, colon and thymus. A small but significant expression is found in liver, ovary, testis, prostate, small intestine and leukocytes. Very low expression, nearly undetectable, in lung and spleen.

The protein localises to the cell membrane. Its subcellular location is the apical cell membrane. Functionally, ancillary protein that functions as a regulatory subunit of the voltage-gated potassium (Kv) channel complex composed of pore-forming and potassium-conducting alpha subunits and of regulatory beta subunits. KCNE2 beta subunit modulates the gating kinetics and enhances stability of the channel complex. Alters the gating of the delayed rectifier Kv channel containing KCNB1 alpha subunit. Associates with KCNH2/HERG alpha subunit Kv channel to form the rapidly activating component of the delayed rectifying potassium current (IKr) in heart. May associate with KCNQ2 and/or KCNQ3 alpha subunits to modulate the native M-type current. May associate with HCN1 and HCN2 channel subunits to increase potassium current. Forms a heterooligomer complex with KCNQ1/KVLQT1 alpha subunits which leads to currents with an apparently instantaneous activation, a rapid deactivation process and a linear current-voltage relationship and decreases the amplitude of the outward current. KCNQ1-KCNE2 channel associates with Na(+)-coupled myo-inositol symporter in the apical membrane of choroid plexus epithelium and regulates the myo-inositol gradient between blood and cerebrospinal fluid with an impact on neuron excitability. The protein is Potassium voltage-gated channel subfamily E member 2 of Homo sapiens (Human).